The sequence spans 1452 residues: CLIP-associating protein 1 (1452 aa).

3 HEAT repeats span residues 68-87 (LLGM…RFRS), 88-124 (QIGT…QASN), and 163-200 (LTLS…HVGE). Residues 239 to 299 (KNFDDEDSVD…GTAKEGAGGV (61 aa)) are disordered. Over residues 253–267 (SSASSSASSKAPQAA) the composition is skewed to low complexity. HEAT repeat units follow at residues 407-442 (HGAE…IRQT) and 443-479 (HVPR…EWQT). 2 disordered regions span residues 545–735 (SDSI…GISQ) and 771–792 (YGMY…ERSY). Low complexity predominate over residues 550–569 (SLPQSDRSSSSSQESLNRPL). Residues 573–597 (RSPTGSTVSRASTATSKSTPGSLQR) show a composition bias toward polar residues. Composition is skewed to low complexity over residues 606–621 (AATC…ASAA), 645–659 (QSSG…TPAD), and 668–682 (VVSQ…SSPG). The span at 715-724 (QGCSRETSPS) shows a compositional bias: polar residues. Residues 781-792 (SDASSACSERSY) are compositionally biased toward low complexity. Residues 926-963 (QQFNILMRFIVDQTQTPNLKVKVAILKYIESLARQMDP) form an HEAT 6 repeat. A disordered region spans residues 1033–1076 (LKNSSNSSMGSPSNTIGRTPSRHSSSRASPLTSPTNCSHGGLSP). The span at 1034 to 1046 (KNSSNSSMGSPSN) shows a compositional bias: low complexity. Residues 1058–1070 (SRASPLTSPTNCS) are compositionally biased toward polar residues. HEAT repeat units lie at residues 1256–1293 (EHFK…NQPA) and 1374–1411 (QILP…VIGE).

This sequence belongs to the CLASP family. As to quaternary structure, interacts (via C-terminus) with clip1/clip-170, and cenpe.

It localises to the cytoplasm. It is found in the cytoskeleton. Its subcellular location is the microtubule organizing center. The protein resides in the centrosome. The protein localises to the chromosome. It localises to the centromere. It is found in the kinetochore. Its subcellular location is the spindle. The protein resides in the golgi apparatus. The protein localises to the trans-Golgi network. In terms of biological role, microtubule plus-end tracking protein that promotes the stabilization of dynamic microtubules during anaphase. Plays a crucial role in chromatin-induced microtubule formation. May also act at microtubule minus ends. May be involved in the nucleation of noncentrosomal microtubules originating from the trans-Golgi network (TGN). This is CLIP-associating protein 1 from Xenopus tropicalis (Western clawed frog).